Reading from the N-terminus, the 162-residue chain is Thy-1 membrane glycoprotein (162 aa).

Residues 1 to 19 form the signal peptide; that stretch reads MNPAISVALLLSVLQVSRG. Q20 carries the post-translational modification Pyrrolidone carboxylic acid. Residues 20–127 form the Ig-like V-type domain; sequence QKVTSLTACL…NKSISVYRDK (108 aa). Disulfide bonds link C28/C131 and C38/C105. Residues N42, N94, and N118 are each glycosylated (N-linked (GlcNAc...) asparagine). A lipid anchor (GPI-anchor amidated cysteine; alternate) is attached at C131. The propeptide at 132–162 is removed in mature form; that stretch reads GGISLLVQNTSWMLLLLLSLSLLQALDFISL.

It localises to the cell membrane. Its function is as follows. May play a role in cell-cell or cell-ligand interactions during synaptogenesis and other events in the brain. The polypeptide is Thy-1 membrane glycoprotein (Thy1) (Mus musculus (Mouse)).